The following is a 556-amino-acid chain: Delta-1-pyrroline-5-carboxylate dehydrogenase 12A1, mitochondrial (556 aa).

282 to 287 (GSSRVA) is a binding site for NAD(+). The active-site Proton acceptor is Glu-301. Residue Cys-336 is the Nucleophile of the active site.

It belongs to the aldehyde dehydrogenase family. Highly expressed in flowers. Constitutively expressed at low levels in the other tissues. Highly expressed in pollen grains and tissues undergoing cell death. Expressed in old leaves, mature siliques and developing embryos.

It localises to the mitochondrion matrix. The enzyme catalyses (S)-1-pyrroline-5-carboxylate + NAD(+) + 2 H2O = L-glutamate + NADH + H(+). The protein operates within amino-acid degradation; L-proline degradation into L-glutamate; L-glutamate from L-proline: step 2/2. Plays a role in the inhibition of programmed cell death by converting the toxic proline catabolism intermediate (s)-1-pyrroline-5-carboxylate (P5C) to glutamate. This chain is Delta-1-pyrroline-5-carboxylate dehydrogenase 12A1, mitochondrial, found in Arabidopsis thaliana (Mouse-ear cress).